Consider the following 573-residue polypeptide: Sulfate adenylyltransferase (573 aa).

The tract at residues 1–169 (MSNPPHGGVL…LEAVNKLQHY (169 aa)) is N-terminal. A catalytic region spans residues 170-394 (DFVDLRYSPA…LRESHPPRSQ (225 aa)). Gln-197 lines the sulfate pocket. ATP contacts are provided by residues 197 to 200 (QTRN) and 291 to 294 (GRDH). Residues Thr-198, Arg-199, and Asn-200 contribute to the active site. A sulfate-binding site is contributed by Arg-199. Ala-295 is a binding site for sulfate. An ATP-binding site is contributed by Met-333. The allosteric regulation domain; adenylyl-sulfate kinase-like stretch occupies residues 395–573 (QGFTVLFTGY…LESQGLLDRF (179 aa)). 3'-phosphoadenylyl sulfate-binding positions include 434 to 437 (ENIR), Arg-451, 477 to 478 (IA), and Arg-515.

This sequence in the N-terminal section; belongs to the sulfate adenylyltransferase family. It in the C-terminal section; belongs to the APS kinase family. In terms of assembly, homohexamer. Dimer of trimers.

Its subcellular location is the cytoplasm. It carries out the reaction sulfate + ATP + H(+) = adenosine 5'-phosphosulfate + diphosphate. The protein operates within sulfur metabolism; hydrogen sulfide biosynthesis; sulfite from sulfate: step 1/3. Allosterically inhibited by 3'-phosphoadenosine 5'-phosphosulfate (PAPS). In terms of biological role, catalyzes the first intracellular reaction of sulfate assimilation, forming adenosine-5'-phosphosulfate (APS) from inorganic sulfate and ATP. Plays an important role in sulfate activation as a component of the biosynthesis pathway of sulfur-containing amino acids. This is Sulfate adenylyltransferase (cys-11) from Neurospora crassa (strain ATCC 24698 / 74-OR23-1A / CBS 708.71 / DSM 1257 / FGSC 987).